A 250-amino-acid chain; its full sequence is Methionine aminopeptidase (250 aa).

A substrate-binding site is contributed by His-77. A divalent metal cation-binding residues include Asp-94, Asp-105, and His-169. His-176 provides a ligand contact to substrate. Residues Glu-202 and Glu-235 each coordinate a divalent metal cation.

It belongs to the peptidase M24A family. Methionine aminopeptidase type 1 subfamily. As to quaternary structure, monomer. Requires Co(2+) as cofactor. Zn(2+) serves as cofactor. Mn(2+) is required as a cofactor. The cofactor is Fe(2+).

It catalyses the reaction Release of N-terminal amino acids, preferentially methionine, from peptides and arylamides.. Functionally, removes the N-terminal methionine from nascent proteins. The N-terminal methionine is often cleaved when the second residue in the primary sequence is small and uncharged (Met-Ala-, Cys, Gly, Pro, Ser, Thr, or Val). Requires deformylation of the N(alpha)-formylated initiator methionine before it can be hydrolyzed. In Mycoplasmoides gallisepticum (strain R(low / passage 15 / clone 2)) (Mycoplasma gallisepticum), this protein is Methionine aminopeptidase.